Here is a 157-residue protein sequence, read N- to C-terminus: V-type proton ATPase 16 kDa proteolipid subunit c (157 aa).

Residues 1 to 10 are Lumenal-facing; sequence MALPEENPVY. The helical transmembrane segment at 11–33 threads the bilayer; sequence GPFFGVMGAAAAIIFSALGAAYG. The Cytoplasmic segment spans residues 34–55; that stretch reads TAKSGTGIAAMSVMRPELIMKS. Residues 56-76 form a helical membrane-spanning segment; sequence IIPVVMAGIIAIYGLVVAVLI. Residues 77 to 94 lie on the Lumenal side of the membrane; that stretch reads AGSLDTPTKYSLYKGFIH. A helical transmembrane segment spans residues 95 to 116; sequence LGAGLAVGFSGLAAGFAIGIVG. The Cytoplasmic segment spans residues 117–128; it reads DAGVRGTAQQPR. The chain crosses the membrane as a helical span at residues 129–154; sequence LFVGMILILIFAEVLGLYGLIVAIYL. Residues 155–157 are Lumenal-facing; that stretch reads YTK.

This sequence belongs to the V-ATPase proteolipid subunit family. In terms of assembly, V-ATPase is a heteromultimeric enzyme made up of two complexes: the ATP-hydrolytic V1 complex and the proton translocation V0 complex. The V1 complex consists of three catalytic AB heterodimers that form a heterohexamer, three peripheral stalks each consisting of EG heterodimers, one central rotor including subunits D and F, and the regulatory subunits C and H. The proton translocation complex V0 consists of the proton transport subunit a, a ring of proteolipid subunits c9c'', rotary subunit d, subunits e and f, and the accessory subunits VhaAC45 and ATP6AP2.

Its subcellular location is the membrane. In terms of biological role, proton-conducting pore forming subunit of the V0 complex of vacuolar(H+)-ATPase (V-ATPase), a multisubunit enzyme composed of a peripheral complex (V1) that hydrolyzes ATP and a membrane integral complex (V0) that translocates protons. V-ATPase is responsible for acidifying and maintaining the pH of intracellular compartments and in some cell types, is targeted to the plasma membrane, where it is responsible for acidifying the extracellular environment. In Aedes aegypti (Yellowfever mosquito), this protein is V-type proton ATPase 16 kDa proteolipid subunit c.